The chain runs to 356 residues: Staphylococcal superantigen-like 3 (356 aa).

The N-terminal stretch at 1–30 is a signal peptide; that stretch reads MKMRTIAKTSLALGLLTTGAITVTTQSVKA. The interval 61-165 is disordered; sequence ATTQAANTRQ…TIKQAQTDMT (105 aa). The segment covering 69 to 104 has biased composition (basic and acidic residues); sequence RQERTPKLEKAPNTNEEKTSASKIEKISQPKQEEQK. Low complexity predominate over residues 114-141; the sequence is PKQEQSQTTTESTTPKTKVTTPPSTNTP. Residues 142–164 are compositionally biased toward polar residues; it reads QPMQSTKSDTPQSPTIKQAQTDM. The tract at residues 228-326 is sialyl Lewis X-binding; sequence IDVFIVLEDN…VIKMKNGGKY (99 aa).

Belongs to the staphylococcal/streptococcal toxin family. As to quaternary structure, interacts with host TLR2 (via its extracellular domain).

Its subcellular location is the secreted. Its function is as follows. Secreted protein that plays an essential role in immune innate response inhibition by interacting with and inhibiting host TLR2. In turn, bacteria recognition by immune cells is impaired and cytokine production is inhibited. Mechanistically, by interacting with TLR2, blocks ligand binding and thus inhibits activation. Second, by interacting with an already formed TLR2-lipopeptide complex, prevents TLR heterodimerization and downstream signaling. The interaction with host TLR2 does not involve sialyl Lewis X interactions. This is Staphylococcal superantigen-like 3 from Staphylococcus aureus (strain NCTC 8325 / PS 47).